Consider the following 236-residue polypeptide: Biosynthetic peptidoglycan transglycosylase (236 aa).

Residues 12 to 31 (ALLWFAAGSIAVVLVLRWVP) traverse the membrane as a helical segment.

Belongs to the glycosyltransferase 51 family.

It is found in the cell inner membrane. It carries out the reaction [GlcNAc-(1-&gt;4)-Mur2Ac(oyl-L-Ala-gamma-D-Glu-L-Lys-D-Ala-D-Ala)](n)-di-trans,octa-cis-undecaprenyl diphosphate + beta-D-GlcNAc-(1-&gt;4)-Mur2Ac(oyl-L-Ala-gamma-D-Glu-L-Lys-D-Ala-D-Ala)-di-trans,octa-cis-undecaprenyl diphosphate = [GlcNAc-(1-&gt;4)-Mur2Ac(oyl-L-Ala-gamma-D-Glu-L-Lys-D-Ala-D-Ala)](n+1)-di-trans,octa-cis-undecaprenyl diphosphate + di-trans,octa-cis-undecaprenyl diphosphate + H(+). It participates in cell wall biogenesis; peptidoglycan biosynthesis. Peptidoglycan polymerase that catalyzes glycan chain elongation from lipid-linked precursors. The protein is Biosynthetic peptidoglycan transglycosylase of Pseudomonas entomophila (strain L48).